The sequence spans 101 residues: NADH-ubiquinone oxidoreductase chain 5 (101 aa).

The next 3 membrane-spanning stretches (helical) occupy residues 12–32 (IALFTVFIIDIIKFYILSGVI), 48–68 (FLFITMGFLFFIFTTWYFICF), and 79–99 (LVIYFRYNLKYCLFFCMLFII).

This sequence belongs to the complex I subunit 5 family.

It is found in the mitochondrion inner membrane. It carries out the reaction a ubiquinone + NADH + 5 H(+)(in) = a ubiquinol + NAD(+) + 4 H(+)(out). Functionally, core subunit of the mitochondrial membrane respiratory chain NADH dehydrogenase (Complex I) that is believed to belong to the minimal assembly required for catalysis. Complex I functions in the transfer of electrons from NADH to the respiratory chain. The immediate electron acceptor for the enzyme is believed to be ubiquinone. This Leishmania tarentolae (Sauroleishmania tarentolae) protein is NADH-ubiquinone oxidoreductase chain 5 (ND5).